A 196-amino-acid chain; its full sequence is Imidazole glycerol phosphate synthase subunit HisH (196 aa).

One can recognise a Glutamine amidotransferase type-1 domain in the interval 2–196 (NVVILDTGCA…AKLLKNFLEM (195 aa)). The active-site Nucleophile is C77. Active-site residues include H178 and E180.

Heterodimer of HisH and HisF.

It localises to the cytoplasm. It catalyses the reaction 5-[(5-phospho-1-deoxy-D-ribulos-1-ylimino)methylamino]-1-(5-phospho-beta-D-ribosyl)imidazole-4-carboxamide + L-glutamine = D-erythro-1-(imidazol-4-yl)glycerol 3-phosphate + 5-amino-1-(5-phospho-beta-D-ribosyl)imidazole-4-carboxamide + L-glutamate + H(+). The enzyme catalyses L-glutamine + H2O = L-glutamate + NH4(+). The protein operates within amino-acid biosynthesis; L-histidine biosynthesis; L-histidine from 5-phospho-alpha-D-ribose 1-diphosphate: step 5/9. In terms of biological role, IGPS catalyzes the conversion of PRFAR and glutamine to IGP, AICAR and glutamate. The HisH subunit catalyzes the hydrolysis of glutamine to glutamate and ammonia as part of the synthesis of IGP and AICAR. The resulting ammonia molecule is channeled to the active site of HisF. The protein is Imidazole glycerol phosphate synthase subunit HisH of Shigella flexneri.